The following is a 388-amino-acid chain: 1-deoxy-D-xylulose 5-phosphate reductoisomerase (388 aa).

The NADPH site is built by Thr-15, Gly-16, Ser-17, Ile-18, and Asn-127. Position 128 (Lys-128) interacts with 1-deoxy-D-xylulose 5-phosphate. Glu-129 provides a ligand contact to NADPH. Position 153 (Asp-153) interacts with Mn(2+). 1-deoxy-D-xylulose 5-phosphate is bound by residues Ser-154, Glu-155, Ser-179, and His-202. Glu-155 provides a ligand contact to Mn(2+). NADPH is bound at residue Gly-208. 1-deoxy-D-xylulose 5-phosphate contacts are provided by Ser-215, Asn-220, Lys-221, and Glu-224. Residue Glu-224 coordinates Mn(2+).

The protein belongs to the DXR family. It depends on Mg(2+) as a cofactor. The cofactor is Mn(2+).

It catalyses the reaction 2-C-methyl-D-erythritol 4-phosphate + NADP(+) = 1-deoxy-D-xylulose 5-phosphate + NADPH + H(+). It participates in isoprenoid biosynthesis; isopentenyl diphosphate biosynthesis via DXP pathway; isopentenyl diphosphate from 1-deoxy-D-xylulose 5-phosphate: step 1/6. Its function is as follows. Catalyzes the NADPH-dependent rearrangement and reduction of 1-deoxy-D-xylulose-5-phosphate (DXP) to 2-C-methyl-D-erythritol 4-phosphate (MEP). This chain is 1-deoxy-D-xylulose 5-phosphate reductoisomerase, found in Bacteroides fragilis (strain ATCC 25285 / DSM 2151 / CCUG 4856 / JCM 11019 / LMG 10263 / NCTC 9343 / Onslow / VPI 2553 / EN-2).